The following is a 385-amino-acid chain: Homoserine O-succinyltransferase (385 aa).

The AB hydrolase-1 domain occupies 51–359 (NAILICHALS…EATEGHDAFL (309 aa)). Ser157 serves as the catalytic Nucleophile. Residue Arg227 coordinates substrate. Catalysis depends on residues Asp322 and His355. Asp356 contributes to the substrate binding site.

Belongs to the AB hydrolase superfamily. MetX family. As to quaternary structure, homodimer.

It localises to the cytoplasm. The catalysed reaction is L-homoserine + succinyl-CoA = O-succinyl-L-homoserine + CoA. It participates in amino-acid biosynthesis; L-methionine biosynthesis via de novo pathway; O-succinyl-L-homoserine from L-homoserine: step 1/1. Transfers a succinyl group from succinyl-CoA to L-homoserine, forming succinyl-L-homoserine. In Marinomonas sp. (strain MWYL1), this protein is Homoserine O-succinyltransferase.